A 1394-amino-acid polypeptide reads, in one-letter code: DNA-directed RNA polymerase subunit beta' (1394 aa).

Residues C71, C73, C86, and C89 each coordinate Zn(2+). D462, D464, and D466 together coordinate Mg(2+). Positions 810, 884, 891, and 894 each coordinate Zn(2+).

The protein belongs to the RNA polymerase beta' chain family. In terms of assembly, the RNAP catalytic core consists of 2 alpha, 1 beta, 1 beta' and 1 omega subunit. When a sigma factor is associated with the core the holoenzyme is formed, which can initiate transcription. Mg(2+) is required as a cofactor. It depends on Zn(2+) as a cofactor.

The catalysed reaction is RNA(n) + a ribonucleoside 5'-triphosphate = RNA(n+1) + diphosphate. In terms of biological role, DNA-dependent RNA polymerase catalyzes the transcription of DNA into RNA using the four ribonucleoside triphosphates as substrates. The sequence is that of DNA-directed RNA polymerase subunit beta' from Caulobacter sp. (strain K31).